The chain runs to 334 residues: Ornithine carbamoyltransferase (334 aa).

Carbamoyl phosphate contacts are provided by residues 56 to 59, Gln-83, Arg-107, and 134 to 137; these read STRT and HPTQ. Residues Asn-168, Asp-232, and 236–237 each bind L-ornithine; that span reads SM. Residues 274–275 and Arg-320 contribute to the carbamoyl phosphate site; that span reads CL.

It belongs to the aspartate/ornithine carbamoyltransferase superfamily. OTCase family.

Its subcellular location is the cytoplasm. It carries out the reaction carbamoyl phosphate + L-ornithine = L-citrulline + phosphate + H(+). The protein operates within amino-acid biosynthesis; L-arginine biosynthesis; L-arginine from L-ornithine and carbamoyl phosphate: step 1/3. Functionally, reversibly catalyzes the transfer of the carbamoyl group from carbamoyl phosphate (CP) to the N(epsilon) atom of ornithine (ORN) to produce L-citrulline. This is Ornithine carbamoyltransferase from Shigella dysenteriae serotype 1 (strain Sd197).